Consider the following 313-residue polypeptide: Homoserine O-succinyltransferase (313 aa).

The Acyl-thioester intermediate role is filled by Cys-142. Substrate is bound by residues Lys-163 and Ser-192. Catalysis depends on His-235, which acts as the Proton acceptor. Glu-237 is an active-site residue. A substrate-binding site is contributed by Arg-249.

It belongs to the MetA family.

Its subcellular location is the cytoplasm. It carries out the reaction L-homoserine + succinyl-CoA = O-succinyl-L-homoserine + CoA. It functions in the pathway amino-acid biosynthesis; L-methionine biosynthesis via de novo pathway; O-succinyl-L-homoserine from L-homoserine: step 1/1. In terms of biological role, transfers a succinyl group from succinyl-CoA to L-homoserine, forming succinyl-L-homoserine. The chain is Homoserine O-succinyltransferase from Vibrio campbellii (strain ATCC BAA-1116).